Consider the following 186-residue polypeptide: Ribosome-recycling factor (186 aa).

Belongs to the RRF family.

The protein resides in the cytoplasm. In terms of biological role, responsible for the release of ribosomes from messenger RNA at the termination of protein biosynthesis. May increase the efficiency of translation by recycling ribosomes from one round of translation to another. The chain is Ribosome-recycling factor from Albidiferax ferrireducens (strain ATCC BAA-621 / DSM 15236 / T118) (Rhodoferax ferrireducens).